The primary structure comprises 298 residues: Nucleotide-binding protein MAV_3359 (298 aa).

Residue 18-25 (GLSGAGRG) coordinates ATP. A GTP-binding site is contributed by 69–72 (DVRS).

The protein belongs to the RapZ-like family.

In terms of biological role, displays ATPase and GTPase activities. This is Nucleotide-binding protein MAV_3359 from Mycobacterium avium (strain 104).